The following is a 341-amino-acid chain: Protein pelota homolog (341 aa).

Belongs to the eukaryotic release factor 1 family. Pelota subfamily. In terms of assembly, monomer. A divalent metal cation is required as a cofactor.

It localises to the cytoplasm. May function in recognizing stalled ribosomes, interact with stem-loop structures in stalled mRNA molecules, and effect endonucleolytic cleavage of the mRNA. May play a role in the release non-functional ribosomes and degradation of damaged mRNAs. Has endoribonuclease activity. The chain is Protein pelota homolog from Methanospirillum hungatei JF-1 (strain ATCC 27890 / DSM 864 / NBRC 100397 / JF-1).